We begin with the raw amino-acid sequence, 225 residues long: UPF0758 protein XOO0495 (225 aa).

The 123-residue stretch at 102-224 folds into the MPN domain; the sequence is ALSDPPSVGR…PVSLAERGWL (123 aa). 3 residues coordinate Zn(2+): His173, His175, and Asp186. The JAMM motif signature appears at 173–186; it reads HNHPSGNPEPSKAD.

Belongs to the UPF0758 family.

In Xanthomonas oryzae pv. oryzae (strain KACC10331 / KXO85), this protein is UPF0758 protein XOO0495.